A 119-amino-acid polypeptide reads, in one-letter code: Large ribosomal subunit protein bL20 (119 aa).

The protein belongs to the bacterial ribosomal protein bL20 family.

Binds directly to 23S ribosomal RNA and is necessary for the in vitro assembly process of the 50S ribosomal subunit. It is not involved in the protein synthesizing functions of that subunit. The chain is Large ribosomal subunit protein bL20 from Dichelobacter nodosus (strain VCS1703A).